Here is a 719-residue protein sequence, read N- to C-terminus: Phenylalanine--tRNA ligase beta subunit, chloroplastic (719 aa).

The region spanning 318 to 403 is the B5 domain; sequence DHALNINLSI…RIYGYHKFRS (86 aa). Mg(2+) is bound by residues D381, D387, E390, and E391. Positions 625–718 constitute an FDX-ACB domain; sequence SKYPSIIRDL…IVKQLNLKIR (94 aa).

Belongs to the phenylalanyl-tRNA synthetase beta subunit family. Type 1 subfamily. As to quaternary structure, tetramer of two alpha and two beta subunits. Mg(2+) is required as a cofactor.

The protein localises to the plastid. The protein resides in the chloroplast. The enzyme catalyses tRNA(Phe) + L-phenylalanine + ATP = L-phenylalanyl-tRNA(Phe) + AMP + diphosphate + H(+). The polypeptide is Phenylalanine--tRNA ligase beta subunit, chloroplastic (Pyropia yezoensis (Susabi-nori)).